Consider the following 2273-residue polypeptide: Acetyl-CoA carboxylase, mitochondrial (2273 aa).

A mitochondrion-targeting transit peptide spans 1 to 104 (KGKTITHGQS…RGNIHKHTRL (104 aa)). Positions 134–635 (VISKILIANN…STGWLDDLIL (502 aa)) constitute a Biotin carboxylation domain. The 193-residue stretch at 292 to 484 (KTNFVSVPDD…LPATQLQIAM (193 aa)) folds into the ATP-grasp domain. 332 to 337 (GGGGKG) contributes to the ATP binding site. Arg459 is an active-site residue. One can recognise a Biotinyl-binding domain in the interval 763-837 (LEAELNPTQV…EAGDVIAKLT (75 aa)). Lys804 is subject to N6-biotinyllysine. The 336-residue stretch at 1532–1867 (PYSVKDWLQP…KRDMSPPLLE (336 aa)) folds into the CoA carboxyltransferase N-terminal domain. The segment at 1532 to 2187 (PYSVKDWLQP…EGQVIKRLQK (656 aa)) is carboxyltransferase. Residues Arg1776, Lys2080, and Arg2082 each coordinate CoA. The region spanning 1871 to 2187 (RWDRDVDFKP…EGQVIKRLQK (317 aa)) is the CoA carboxyltransferase C-terminal domain.

Biotin serves as cofactor.

The protein resides in the mitochondrion. It carries out the reaction hydrogencarbonate + acetyl-CoA + ATP = malonyl-CoA + ADP + phosphate + H(+). The catalysed reaction is N(6)-biotinyl-L-lysyl-[protein] + hydrogencarbonate + ATP = N(6)-carboxybiotinyl-L-lysyl-[protein] + ADP + phosphate + H(+). It functions in the pathway lipid metabolism; malonyl-CoA biosynthesis; malonyl-CoA from acetyl-CoA: step 1/1. Its function is as follows. Catalyzes the rate-limiting reaction in the mitochondrial fatty acid synthesis (FAS) type II pathway. Responsible for the production of the mitochondrial malonyl-CoA, used for the biosynthesis of the cofactor lipoic acid. This protein carries three functions: biotin carboxyl carrier protein, biotin carboxylase, and carboxyltransferase. This is Acetyl-CoA carboxylase, mitochondrial (HFA1) from Saccharomyces cerevisiae (strain ATCC 204508 / S288c) (Baker's yeast).